A 407-amino-acid chain; its full sequence is Argininosuccinate synthase (407 aa).

8–16 contacts ATP; sequence AYSGGLDTT. Residues tyrosine 86 and serine 91 each coordinate L-citrulline. Glycine 116 provides a ligand contact to ATP. Residues threonine 118, asparagine 122, and aspartate 123 each contribute to the L-aspartate site. Asparagine 122 contacts L-citrulline. L-citrulline contacts are provided by arginine 126, serine 178, serine 187, glutamate 264, and tyrosine 276.

This sequence belongs to the argininosuccinate synthase family. Type 1 subfamily. As to quaternary structure, homotetramer.

The protein localises to the cytoplasm. It catalyses the reaction L-citrulline + L-aspartate + ATP = 2-(N(omega)-L-arginino)succinate + AMP + diphosphate + H(+). The protein operates within amino-acid biosynthesis; L-arginine biosynthesis; L-arginine from L-ornithine and carbamoyl phosphate: step 2/3. The polypeptide is Argininosuccinate synthase (Lachnoclostridium phytofermentans (strain ATCC 700394 / DSM 18823 / ISDg) (Clostridium phytofermentans)).